The primary structure comprises 60 residues: Putative mercuric resistance protein (60 aa).

The protein is Putative mercuric resistance protein of Shigella flexneri.